The following is a 110-amino-acid chain: Large ribosomal subunit protein uL22 (110 aa).

The protein belongs to the universal ribosomal protein uL22 family. In terms of assembly, part of the 50S ribosomal subunit.

This protein binds specifically to 23S rRNA; its binding is stimulated by other ribosomal proteins, e.g. L4, L17, and L20. It is important during the early stages of 50S assembly. It makes multiple contacts with different domains of the 23S rRNA in the assembled 50S subunit and ribosome. In terms of biological role, the globular domain of the protein is located near the polypeptide exit tunnel on the outside of the subunit, while an extended beta-hairpin is found that lines the wall of the exit tunnel in the center of the 70S ribosome. In Nitrosomonas europaea (strain ATCC 19718 / CIP 103999 / KCTC 2705 / NBRC 14298), this protein is Large ribosomal subunit protein uL22.